The following is a 61-amino-acid chain: Short neurotoxin 1 (61 aa).

Intrachain disulfides connect Cys-3/Cys-23, Cys-17/Cys-40, Cys-42/Cys-53, and Cys-54/Cys-59.

The protein belongs to the three-finger toxin family. Short-chain subfamily. Type I alpha-neurotoxin sub-subfamily. In terms of tissue distribution, expressed by the venom gland.

The protein resides in the secreted. Binds to muscle nicotinic acetylcholine receptor (nAChR) and inhibit acetylcholine from binding to the receptor, thereby impairing neuromuscular transmission. This chain is Short neurotoxin 1, found in Naja samarensis (Peters' cobra).